The sequence spans 117 residues: Ribosome-binding factor A (117 aa).

This sequence belongs to the RbfA family. Monomer. Binds 30S ribosomal subunits, but not 50S ribosomal subunits or 70S ribosomes.

It is found in the cytoplasm. Its function is as follows. One of several proteins that assist in the late maturation steps of the functional core of the 30S ribosomal subunit. Associates with free 30S ribosomal subunits (but not with 30S subunits that are part of 70S ribosomes or polysomes). Required for efficient processing of 16S rRNA. May interact with the 5'-terminal helix region of 16S rRNA. This is Ribosome-binding factor A from Nitrosomonas europaea (strain ATCC 19718 / CIP 103999 / KCTC 2705 / NBRC 14298).